Reading from the N-terminus, the 166-residue chain is Lipoprotein signal peptidase (166 aa).

4 helical membrane-spanning segments follow: residues 10-30 (GGALAPWLGISLIVILFDQLT), 32-52 (IAVLKTFAYGAMHALTPFFNL), 71-91 (WQRWAFTALGIGATLVICYLL), and 100-120 (FSLSLALILGGALGNVIDRLI). Active-site residues include D126 and D144. A helical membrane pass occupies residues 135 to 155 (WHWPAFNLADSAITVGAVLLI).

This sequence belongs to the peptidase A8 family.

It localises to the cell inner membrane. The enzyme catalyses Release of signal peptides from bacterial membrane prolipoproteins. Hydrolyzes -Xaa-Yaa-Zaa-|-(S,diacylglyceryl)Cys-, in which Xaa is hydrophobic (preferably Leu), and Yaa (Ala or Ser) and Zaa (Gly or Ala) have small, neutral side chains.. It functions in the pathway protein modification; lipoprotein biosynthesis (signal peptide cleavage). This protein specifically catalyzes the removal of signal peptides from prolipoproteins. This chain is Lipoprotein signal peptidase, found in Burkholderia mallei (strain ATCC 23344).